A 607-amino-acid polypeptide reads, in one-letter code: Elongation factor 4 (607 aa).

The tr-type G domain maps to 11–193 (EKIRNFSIIA…QIVEKVPAPQ (183 aa)). Residues 23–28 (DHGKST) and 140–143 (NKID) each bind GTP.

This sequence belongs to the TRAFAC class translation factor GTPase superfamily. Classic translation factor GTPase family. LepA subfamily.

It localises to the cell membrane. It carries out the reaction GTP + H2O = GDP + phosphate + H(+). Functionally, required for accurate and efficient protein synthesis under certain stress conditions. May act as a fidelity factor of the translation reaction, by catalyzing a one-codon backward translocation of tRNAs on improperly translocated ribosomes. Back-translocation proceeds from a post-translocation (POST) complex to a pre-translocation (PRE) complex, thus giving elongation factor G a second chance to translocate the tRNAs correctly. Binds to ribosomes in a GTP-dependent manner. This is Elongation factor 4 from Lactococcus lactis subsp. cremoris (strain MG1363).